We begin with the raw amino-acid sequence, 679 residues long: Transmembrane protein 214-B (679 aa).

The disordered stretch occupies residues 1-94 (MASGAPDGKW…KKKPQSGDSV (94 aa)). The span at 18 to 30 (KSGERREGERKAL) shows a compositional bias: basic and acidic residues. N-linked (GlcNAc...) asparagine glycans are attached at residues Asn70, Asn298, and Asn322. Helical transmembrane passes span 468-488 (GGFP…GSVL) and 606-626 (LLLH…EAAV).

This sequence belongs to the TMEM214 family. In terms of assembly, constitutively interacts with CASP4; required for the localization of procaspase 4 to the ER.

It localises to the endoplasmic reticulum membrane. In terms of biological role, critical mediator, in cooperation with CASP4, of endoplasmic reticulum-stress induced apoptosis. Required or the activation of CASP4 following endoplasmic reticulum stress. The polypeptide is Transmembrane protein 214-B (tmem214-b) (Xenopus laevis (African clawed frog)).